The chain runs to 2641 residues: Inverse autotransporter adhesin YeeJ (2641 aa).

An N-terminal signal peptide occupies residues 1–26; it reads MGIKLRRLTAGICLVTQLAFPMAAAA. The LysM domain maps to 50–98; it reads VPYILGALESAQSVAERFGISVAELRKLNQFRTFARGFDNVRQGDELDV. Residues 99-118 form a disordered region; it reads PAQVSEKKLTPPPGNSSDNL. The segment at 125–400 is inverse autotransporter; it reads TSQQIGSLLA…SRYDLVDRNN (276 aa). The invasin 3 domain stretch occupies residues 513-605; it reads QKDSSVSLST…GVDAAKAPAV (93 aa). 17 Big-1 domains span residues 617–711, 721–815, 822–913, 920–1017, 1024–1116, 1123–1220, 1227–1319, 1326–1423, 1430–1523, 1531–1633, 1641–1734, 1741–1837, 1844–1941, 1948–2032, 2048–2139, 2142–2236, and 2244–2336; these read HSSI…AGFI, IATL…VSFV, QVDL…VNFI, ALTL…MTFV, VVVL…VNIA, QVTL…VTFV, QVVL…VHFI, IIEL…SINV, HLTL…VTYV, EISL…VNFT, QVNL…VTLI, KLTS…PTEV, FTSL…LEAI, KLTL…VKVT, and VASF…ITLV. A C-type lectin domain region spans residues 2538 to 2641; that stretch reads KSWWVNAGDA…FAHATCYKNL (104 aa).

This sequence belongs to the intimin/invasin family.

It localises to the cell outer membrane. A probable inverse autotransporter, it may be involved in biofilm formation and cell adhesion. May bind peptidoglycan via its LysM domain. Upon overexpression shows increased mature biofilm formation. The sequence is that of Inverse autotransporter adhesin YeeJ from Escherichia coli O17:K52:H18 (strain UMN026 / ExPEC).